Here is a 631-residue protein sequence, read N- to C-terminus: MEEESKNGGTTIPTEELAVVAVPPVVEEEEPMVGPGPAPRGKRKRPLQFEQAYLDSLPSANMYEKSYMHRDVVTHVAVSAAEFFISGSMDGHLKFWKKKGVGIEFAKHFRSHLGPIEGLAVSIDGLLCCTISNDHAVKIYDVVNYDMMAMIRLPYIPGAVEWVYKQGDVKAKLAVSDRDSLFVHIYDPRSGSNEPIASKEIHMNPIKVMKYNPVSDTMISGDTKGIIEYWSATTLQFPEDEVNFKLKSDTNLFEIIKCKTTISAIEVSPDGKQFSITAPDRRIRVFWFRTGKLRRVYDESLVVAQDLQRSDAPLYRLEAIDFGRRMAVEKELEKTESAPQPNAVFDESSNFLIYATFLGIKVINLHTNTVARILGKVESNERYLRVALYQGDQGGKKVRKIPAAAANVNESKEPLTDPTILCCAFKKHRIYMFSRREPEEPEDASQGRDVFNEKPAADELMSVSDIGNSATTSLPENVIMHTTLGDIHMKLYPEECPKTVENFTTHCRNGYYDNHLFHRVIRGFMIQTGDPLGDGTGGQSIWGREFEDEFHKSLRHDRPFTLSMANAGPNTNGSQFFITTVATPWLDNKHTVFGRVVKGMDVVQGIEKVKTDKNDRPYQDVKILNVTVPKS.

The segment at 26 to 45 (VEEEEPMVGPGPAPRGKRKR) is disordered. WD repeat units lie at residues 68–106 (MHRDVVTHVAVSAAEFFISGSMDGHLKFWKKKGVGIEFA), 111–150 (SHLGPIEGLAVSIDGLLCCTISNDHAVKIYDVVNYDMMAM), 201–240 (IHMNPIKVMKYNPVSDTMISGDTKGIIEYWSATTLQFPED), and 257–297 (KCKT…RRVY). Positions 474–628 (LPENVIMHTT…QDVKILNVTV (155 aa)) constitute a PPIase cyclophilin-type domain.

It belongs to the cyclophilin-type PPIase family. As to quaternary structure, interacts with FAS1 and LHP1. Interacts (via WD repeat domain) with histone H3. Ubiquitous. Expressed in the meristems.

It localises to the nucleus. It catalyses the reaction [protein]-peptidylproline (omega=180) = [protein]-peptidylproline (omega=0). PPIases accelerate the folding of proteins. It catalyzes the cis-trans isomerization of proline imidic peptide bonds in oligopeptides. Histone proline isomerase that increases the rate of cis-trans isomerization of the synthetic histone H3 peptides H3P30 (RKSAP30F-p-nitroanilide) and H3P30K27me3 (RKme3-SAP30F-p-nitroanilide) in the histone H3 N-terminal tail, in vitro. Histone remodeling factor involved in chromatin-based gene silencing. Reinforces H3K27 methylation. Involved in fundamental processes of chromatin assembly and histone modification by mediating the targeting of FAS1 and LHP1 on the chromatin. Required for the formation and development of leaves, for normal phyllotaxy and for the formation, maintenance and activity of root and shoot apical meristems. This chain is Peptidyl-prolyl cis-trans isomerase CYP71, found in Arabidopsis thaliana (Mouse-ear cress).